A 446-amino-acid chain; its full sequence is Tubulin beta-1 chain (446 aa).

Glutamine 13, glutamate 71, serine 140, glycine 144, threonine 145, glycine 146, asparagine 206, and asparagine 228 together coordinate GTP. Position 71 (glutamate 71) interacts with Mg(2+). Residues 421–446 (VSEYQQYQDASADDGEEYEEDAPMEE) are disordered. The segment covering 431 to 446 (SADDGEEYEEDAPMEE) has biased composition (acidic residues).

It belongs to the tubulin family. In terms of assembly, dimer of alpha and beta chains. A typical microtubule is a hollow water-filled tube with an outer diameter of 25 nm and an inner diameter of 15 nM. Alpha-beta heterodimers associate head-to-tail to form protofilaments running lengthwise along the microtubule wall with the beta-tubulin subunit facing the microtubule plus end conferring a structural polarity. Microtubules usually have 13 protofilaments but different protofilament numbers can be found in some organisms and specialized cells. Mg(2+) is required as a cofactor.

It localises to the cytoplasm. Its subcellular location is the cytoskeleton. Functionally, tubulin is the major constituent of microtubules, a cylinder consisting of laterally associated linear protofilaments composed of alpha- and beta-tubulin heterodimers. Microtubules grow by the addition of GTP-tubulin dimers to the microtubule end, where a stabilizing cap forms. Below the cap, tubulin dimers are in GDP-bound state, owing to GTPase activity of alpha-tubulin. This Hypocrea rufa (Trichoderma viride) protein is Tubulin beta-1 chain (tub1).